We begin with the raw amino-acid sequence, 114 residues long: MNQYETVFILTPVLSDVQMKEAVEKFKGILTAEGAEIINEENWGLKKLAYPIQKKSTGFYQLIEFKAEPQVIEKLEINFRRDERVIRFLTFKMDKYAAEYAAKRRNVKSTKKED.

It belongs to the bacterial ribosomal protein bS6 family.

In terms of biological role, binds together with bS18 to 16S ribosomal RNA. The protein is Small ribosomal subunit protein bS6 of Phocaeicola vulgatus (strain ATCC 8482 / DSM 1447 / JCM 5826 / CCUG 4940 / NBRC 14291 / NCTC 11154) (Bacteroides vulgatus).